The following is a 361-amino-acid chain: Phosphoserine aminotransferase (361 aa).

L-glutamate is bound at residue arginine 43. Pyridoxal 5'-phosphate contacts are provided by residues 77-78 (AS), tryptophan 103, threonine 153, aspartate 173, and glutamine 196. Position 197 is an N6-(pyridoxal phosphate)lysine (lysine 197). 238-239 (NT) contacts pyridoxal 5'-phosphate.

It belongs to the class-V pyridoxal-phosphate-dependent aminotransferase family. SerC subfamily. In terms of assembly, homodimer. Pyridoxal 5'-phosphate serves as cofactor.

The protein resides in the cytoplasm. It catalyses the reaction O-phospho-L-serine + 2-oxoglutarate = 3-phosphooxypyruvate + L-glutamate. The enzyme catalyses 4-(phosphooxy)-L-threonine + 2-oxoglutarate = (R)-3-hydroxy-2-oxo-4-phosphooxybutanoate + L-glutamate. It participates in amino-acid biosynthesis; L-serine biosynthesis; L-serine from 3-phospho-D-glycerate: step 2/3. The protein operates within cofactor biosynthesis; pyridoxine 5'-phosphate biosynthesis; pyridoxine 5'-phosphate from D-erythrose 4-phosphate: step 3/5. In terms of biological role, catalyzes the reversible conversion of 3-phosphohydroxypyruvate to phosphoserine and of 3-hydroxy-2-oxo-4-phosphonooxybutanoate to phosphohydroxythreonine. The sequence is that of Phosphoserine aminotransferase from Stutzerimonas stutzeri (Pseudomonas stutzeri).